A 693-amino-acid chain; its full sequence is Glycine--tRNA ligase beta subunit (693 aa).

It belongs to the class-II aminoacyl-tRNA synthetase family. Tetramer of two alpha and two beta subunits.

The protein resides in the cytoplasm. The catalysed reaction is tRNA(Gly) + glycine + ATP = glycyl-tRNA(Gly) + AMP + diphosphate. This Vibrio vulnificus (strain YJ016) protein is Glycine--tRNA ligase beta subunit.